The following is a 787-amino-acid chain: MNQKTLKIMEYERIKQALRGYLVSAAGQHELAELAPTADAKQLQIWLDESRDGADIYRLENGIPLPKLDDIRPHLHRLAMEAALNGLELAQISRVLWTTSSVVKFFRDLTEKEITLRRLDRVVKELVTLPDVTRRLRTSLEGDGHITDEASPALRQIRQHIAQTEVAIRQTMDQYTRGKDAKYLSETIVTIRDERYVIPVRAEYKQRFGGIVHDQSASGQTLFIEPQAVVGLNNRLRQNQIDERHEEQRILAELTALLDPYQAEILRNSEILGHFDFINAKAKYAHQLKATEPKLSEDNQVNLRQARHPLIDPKKVVANDITIGRDYKTIIVTGPNTGGKTITLKTLALVQLMGQSGLFIPANENSVIGIFDDIFADIGDEQSIEQSLSTFSGHMENIVAILRQADERSLIVVDELGAGTDPQEGAALAIAILDQMGTLGSYVMASTHYPELKAYGYNRPETINASMEFDGETLQPTYHLLIGIPGRSNALDIAARLGMPEQVVAAARGLTDQDSQDLNAMISDLTEQKRHADADAERLRQELAEADELHAQLKKQFDAYQHQKDQLMTDAKREANRLVDESRKRANQIISDLRKKQLAAGKSVVKEDELIAAQGALNALQQDSKLKKNRVLRREKAKLDFHKGDSVLVKSYGQVGVLMEQLDDQHWEVQLGILKMKIATNDLEKAQDPAKSAKQPRASVKRSGSSGMSATLDLRGHRYEEAMAEVDRYIDSALLAGYPSVTIIHGKGTGALRKGVTDYLKRNNRIKSFGFSPANAGGDGSTVVHFK.

334-341 (GPNTGGKT) lines the ATP pocket. A disordered region spans residues 685–709 (KAQDPAKSAKQPRASVKRSGSSGMS). The Smr domain maps to 712-787 (LDLRGHRYEE…GDGSTVVHFK (76 aa)).

It belongs to the DNA mismatch repair MutS family. MutS2 subfamily. As to quaternary structure, homodimer. Binds to stalled ribosomes, contacting rRNA.

Its function is as follows. Endonuclease that is involved in the suppression of homologous recombination and thus may have a key role in the control of bacterial genetic diversity. In terms of biological role, acts as a ribosome collision sensor, splitting the ribosome into its 2 subunits. Detects stalled/collided 70S ribosomes which it binds and splits by an ATP-hydrolysis driven conformational change. Acts upstream of the ribosome quality control system (RQC), a ribosome-associated complex that mediates the extraction of incompletely synthesized nascent chains from stalled ribosomes and their subsequent degradation. Probably generates substrates for RQC. The sequence is that of Endonuclease MutS2 from Levilactobacillus brevis (strain ATCC 367 / BCRC 12310 / CIP 105137 / JCM 1170 / LMG 11437 / NCIMB 947 / NCTC 947) (Lactobacillus brevis).